The primary structure comprises 376 residues: Transforming growth factor beta-1 proprotein (376 aa).

The N-terminal stretch at 1 to 22 is a signal peptide; that stretch reads MRVESLLLALQCLLGFVHYSGA. Positions 23–68 are straightjacket domain; that stretch reads LSTCSPLDLELIKRKRIEAIRGQILSKLRLSKEPEVDEEKESQNIP. Residues 69–258 are arm domain; that stretch reads AELISVYNST…SLPLDGNNSS (190 aa). Asn76, Asn125, and Asn167 each carry an N-linked (GlcNAc...) asparagine glycan. The segment at 214-238 is bowtie tail; sequence DPQKTFQLKIPGLVLVRGDTETLAV. Positions 230 to 232 match the Cell attachment site motif; that stretch reads RGD. Intrachain disulfides connect Cys272–Cys280, Cys308–Cys373, and Cys312–Cys375.

It belongs to the TGF-beta family. As to quaternary structure, latency-associated peptide: Homodimer; disulfide-linked. Latency-associated peptide: Interacts with Transforming growth factor beta-1 (TGF-beta-1) chain; interaction is non-covalent and maintains (TGF-beta-1) in a latent state; each Latency-associated peptide (LAP) monomer interacts with TGF-beta-1 in the other monomer. Transforming growth factor beta-1: Homodimer; disulfide-linked. Transforming growth factor beta-1: Interacts with TGF-beta receptors (tgfbr1 and tgfbr2), leading to signal transduction. Interacts with EFEMP2. Post-translationally, transforming growth factor beta-1 proprotein: The precursor proprotein is cleaved in the Golgi apparatus to form Transforming growth factor beta-1 (TGF-beta-1) and Latency-associated peptide (LAP) chains, which remain non-covalently linked, rendering TGF-beta-1 inactive.

Its subcellular location is the secreted. It localises to the extracellular space. It is found in the extracellular matrix. Its function is as follows. Transforming growth factor beta-1 proprotein: Precursor of the Latency-associated peptide (LAP) and Transforming growth factor beta-1 (TGF-beta-1) chains, which constitute the regulatory and active subunit of TGF-beta-1, respectively. In terms of biological role, required to maintain the Transforming growth factor beta-1 (TGF-beta-1) chain in a latent state during storage in extracellular matrix. Associates non-covalently with TGF-beta-1 and regulates its activation via interaction with 'milieu molecules', such as LTBP1, LRRC32/GARP and LRRC33/NRROS, that control activation of TGF-beta-1. Interaction with integrins (ITGAV:ITGB6 or ITGAV:ITGB8) results in distortion of the Latency-associated peptide chain and subsequent release of the active TGF-beta-1. Functionally, transforming growth factor beta-1: Multifunctional protein that regulates the growth and differentiation of various cell types and is involved in various processes, such as normal development, immune function, microglia function and responses to neurodegeneration. Activation into mature form follows different steps: following cleavage of the proprotein in the Golgi apparatus, Latency-associated peptide (LAP) and Transforming growth factor beta-1 (TGF-beta-1) chains remain non-covalently linked rendering TGF-beta-1 inactive during storage in extracellular matrix. At the same time, LAP chain interacts with 'milieu molecules', such as ltbp1, lrrc32/garp and lrrc33/nrros that control activation of TGF-beta-1 and maintain it in a latent state during storage in extracellular milieus. TGF-beta-1 is released from LAP by integrins (ITGAV:ITGB6 or ITGAV:ITGB8): integrin-binding to LAP stabilizes an alternative conformation of the LAP bowtie tail and results in distortion of the LAP chain and subsequent release of the active TGF-beta-1. Once activated following release of LAP, TGF-beta-1 acts by binding to TGF-beta receptors (tgfbr1 and tgfbr2), which transduce signal. While expressed by many cells types, TGF-beta-1 only has a very localized range of action within cell environment thanks to fine regulation of its activation by Latency-associated peptide chain (LAP) and 'milieu molecules'. Plays an important role in bone remodeling: acts as a potent stimulator of osteoblastic bone formation. Can promote either T-helper 17 cells (Th17) or regulatory T-cells (Treg) lineage differentiation in a concentration-dependent manner. Can induce epithelial-to-mesenchymal transition (EMT) and cell migration in various cell types. This chain is Transforming growth factor beta-1 proprotein (tgfb1), found in Cyprinus carpio (Common carp).